The following is a 956-amino-acid chain: Netrin receptor UNC5D (956 aa).

Residues 1–30 form the signal peptide; that stretch reads MGTGAADRSRGARWWLPWLGLCFWAAGAEA. Over 31-382 the chain is Extracellular; the sequence is ARGADSGEVL…SRRGIENASD (352 aa). In terms of domain architecture, Ig-like spans 52–149; that stretch reads PHFIEEPEDA…LGTSKSRKAS (98 aa). Cystine bridges form between Cys-73–Cys-134, Cys-85–Cys-132, Cys-178–Cys-229, Cys-262–Cys-299, Cys-266–Cys-303, Cys-277–Cys-289, Cys-318–Cys-352, Cys-322–Cys-357, and Cys-330–Cys-342. The tract at residues 89 to 91 is important for interaction with FLRT2; it reads WVH. Residues Asn-115 and Asn-226 are each glycosylated (N-linked (GlcNAc...) asparagine). In terms of domain architecture, Ig-like C2-type spans 164–242; sequence QGREVPIEGM…NIVAKRRSLS (79 aa). 2 TSP type-1 domains span residues 250–304 and 306–358; these read NGGW…ALCP and DGSW…GLCI. Residues 383–403 traverse the membrane as a helical segment; that stretch reads IALYSGLGAAVVAVAVLVIGV. The Cytoplasmic segment spans residues 404–956; that stretch reads TLYRRSHSDY…DFNYSRQNGL (553 aa). The ZU5 domain occupies 545 to 685; the sequence is LRTTGVFGHL…FGTYALTGEP (141 aa). The region spanning 862–939 is the Death domain; that stretch reads QRICATFDTP…RTHTKLSNIT (78 aa).

Belongs to the unc-5 family. As to quaternary structure, interacts (via extracellular domain) with FLRT2 and FLRT3 (via extracellular domain); the interaction is direct. Has higher affinity for FLRT2. Identified in a complex with FLRT3 and ADGRL3; does not interact with ADGRL3 by itself. Post-translationally, proteolytically cleaved by caspases during apoptosis. The cleavage does not take place when the receptor is associated with netrin ligand. Its cleavage by caspases is required to induce apoptosis.

It localises to the cell membrane. Receptor for the netrin NTN4 that promotes neuronal cell survival. Plays a role in cell-cell adhesion and cell guidance. Receptor for netrin involved in cell migration. Plays a role in axon guidance by mediating axon repulsion of neuronal growth cones in the developing nervous system upon ligand binding. May play a role in apoptosis in response to DNA damage. It also acts as a dependence receptor required for apoptosis induction when not associated with netrin ligand. Mediates cell-cell adhesion via its interaction with FLRT3 on an adjacent cell. The polypeptide is Netrin receptor UNC5D (Rattus norvegicus (Rat)).